Reading from the N-terminus, the 299-residue chain is Phosphatidylserine decarboxylase proenzyme (299 aa).

Catalysis depends on charge relay system; for autoendoproteolytic cleavage activity residues aspartate 90, histidine 147, and serine 254. Serine 254 (schiff-base intermediate with substrate; via pyruvic acid; for decarboxylase activity) is an active-site residue. Serine 254 is subject to Pyruvic acid (Ser); by autocatalysis.

It belongs to the phosphatidylserine decarboxylase family. PSD-B subfamily. Prokaryotic type I sub-subfamily. As to quaternary structure, heterodimer of a large membrane-associated beta subunit and a small pyruvoyl-containing alpha subunit. Requires pyruvate as cofactor. Post-translationally, is synthesized initially as an inactive proenzyme. Formation of the active enzyme involves a self-maturation process in which the active site pyruvoyl group is generated from an internal serine residue via an autocatalytic post-translational modification. Two non-identical subunits are generated from the proenzyme in this reaction, and the pyruvate is formed at the N-terminus of the alpha chain, which is derived from the carboxyl end of the proenzyme. The autoendoproteolytic cleavage occurs by a canonical serine protease mechanism, in which the side chain hydroxyl group of the serine supplies its oxygen atom to form the C-terminus of the beta chain, while the remainder of the serine residue undergoes an oxidative deamination to produce ammonia and the pyruvoyl prosthetic group on the alpha chain. During this reaction, the Ser that is part of the protease active site of the proenzyme becomes the pyruvoyl prosthetic group, which constitutes an essential element of the active site of the mature decarboxylase.

The protein resides in the cell membrane. It carries out the reaction a 1,2-diacyl-sn-glycero-3-phospho-L-serine + H(+) = a 1,2-diacyl-sn-glycero-3-phosphoethanolamine + CO2. It functions in the pathway phospholipid metabolism; phosphatidylethanolamine biosynthesis; phosphatidylethanolamine from CDP-diacylglycerol: step 2/2. Catalyzes the formation of phosphatidylethanolamine (PtdEtn) from phosphatidylserine (PtdSer). The polypeptide is Phosphatidylserine decarboxylase proenzyme (Erwinia tasmaniensis (strain DSM 17950 / CFBP 7177 / CIP 109463 / NCPPB 4357 / Et1/99)).